A 138-amino-acid chain; its full sequence is Large ribosomal subunit protein uL16 (138 aa).

The span at 1–13 (MLQPKRRKYRKEQ) shows a compositional bias: basic residues. The tract at residues 1–24 (MLQPKRRKYRKEQKGRNTGKATRG) is disordered.

Belongs to the universal ribosomal protein uL16 family. In terms of assembly, part of the 50S ribosomal subunit.

In terms of biological role, binds 23S rRNA and is also seen to make contacts with the A and possibly P site tRNAs. This is Large ribosomal subunit protein uL16 from Cupriavidus necator (strain ATCC 17699 / DSM 428 / KCTC 22496 / NCIMB 10442 / H16 / Stanier 337) (Ralstonia eutropha).